We begin with the raw amino-acid sequence, 363 residues long: 3-ketodihydrosphingosine reductase TSC10 (363 aa).

Position 10 (Leu10) interacts with NADP(+). Positions 13, 15, and 17 each coordinate NADPH. A GXSXG motif is present at residues 13 to 17 (GGSQG). NADP(+) is bound at residue Leu18. NADPH contacts are provided by Arg40, Lys44, Asp131, and Leu132. Asp131 provides a ligand contact to NADP(+). The active-site Proton donor is Ser206. 3 residues coordinate NADP(+): Tyr220, Lys224, and Ser253. Tyr220 (proton acceptor) is an active-site residue. The active-site Lowers pKa of active site Tyr is the Lys224. The chain crosses the membrane as a helical span at residues 324–344 (FVQWLIGVIANLLVVPFYMVL).

It belongs to the short-chain dehydrogenases/reductases (SDR) family.

It is found in the endoplasmic reticulum membrane. The enzyme catalyses sphinganine + NADP(+) = 3-oxosphinganine + NADPH + H(+). It participates in lipid metabolism; sphingolipid metabolism. Catalyzes the reduction of 3'-oxosphinganine (3-ketodihydrosphingosine/KDS) to sphinganine (dihydrosphingosine/DHS), the second step of de novo sphingolipid biosynthesis. This Candida glabrata (strain ATCC 2001 / BCRC 20586 / JCM 3761 / NBRC 0622 / NRRL Y-65 / CBS 138) (Yeast) protein is 3-ketodihydrosphingosine reductase TSC10 (TSC10).